The chain runs to 160 residues: Prorelaxin (160 aa).

Disulfide bonds link Cys10–Cys147, Cys22–Cys160, and Cys146–Cys151. The propeptide at 34–133 is connecting peptide; sequence QEKQRILGSG…KDFNLNIYSP (100 aa).

This sequence belongs to the insulin family. Heterodimer of a B chain and an A chain linked by two disulfide bonds. As to expression, expressed in the endometrium during pregnancy and in mammary gland during lactation.

It is found in the secreted. Functionally, relaxin is an ovarian hormone that acts with estrogen to produce dilatation of the birth canal in many mammals. It bears mature young, and allows separation of the pelvic bones. The polypeptide is Prorelaxin (RLN) (Cavia porcellus (Guinea pig)).